The primary structure comprises 550 residues: Zinc finger protein 426 (550 aa).

Residues 39-110 (VSFEDVIVDF…KIVFPEWKLQ (72 aa)) form the KRAB domain. C2H2-type zinc fingers lie at residues 219 to 241 (FECS…QRTH), 274 to 296 (HRCK…MRTH), 302 to 324 (YECK…GRTH), 330 to 352 (YVCS…VRSH), 358 to 380 (YGCK…IRTH), 386 to 408 (FVCV…LKLH), 414 to 436 (CECK…MRTH), 442 to 464 (YTCK…MRIH), 470 to 492 (YECK…ERTH), 498 to 522 (YECK…SHTH), and 528 to 550 (YKCQ…ERIH).

The protein resides in the nucleus. May be involved in transcriptional regulation. The polypeptide is Zinc finger protein 426 (Znf426) (Mus musculus (Mouse)).